Reading from the N-terminus, the 43-residue chain is Cytochrome b559 subunit beta (43 aa).

A helical transmembrane segment spans residues 18 to 34; it reads WLAIHGLAIPTVFFLGG. Residue His-22 participates in heme binding.

This sequence belongs to the PsbE/PsbF family. As to quaternary structure, heterodimer of an alpha subunit and a beta subunit. PSII is composed of 1 copy each of membrane proteins PsbA, PsbB, PsbC, PsbD, PsbE, PsbF, PsbH, PsbI, PsbJ, PsbK, PsbL, PsbM, PsbT, PsbX, PsbY, PsbZ, Psb30/Ycf12, at least 3 peripheral proteins of the oxygen-evolving complex and a large number of cofactors. It forms dimeric complexes. Heme b serves as cofactor.

The protein resides in the plastid. It localises to the chloroplast thylakoid membrane. Functionally, this b-type cytochrome is tightly associated with the reaction center of photosystem II (PSII). PSII is a light-driven water:plastoquinone oxidoreductase that uses light energy to abstract electrons from H(2)O, generating O(2) and a proton gradient subsequently used for ATP formation. It consists of a core antenna complex that captures photons, and an electron transfer chain that converts photonic excitation into a charge separation. The polypeptide is Cytochrome b559 subunit beta (Trieres chinensis (Marine centric diatom)).